A 597-amino-acid chain; its full sequence is uncharacterized protein (597 aa).

2 consecutive transmembrane segments (helical) span residues 4–23 (LLLA…FKIV) and 209–231 (FVSV…GIAI).

It is found in the cell membrane. This is an uncharacterized protein from Archaeoglobus fulgidus (strain ATCC 49558 / DSM 4304 / JCM 9628 / NBRC 100126 / VC-16).